Here is a 275-residue protein sequence, read N- to C-terminus: Putative rhamnulose-1-phosphate aldolase (275 aa).

Residue Glu117 is part of the active site. 3 residues coordinate Zn(2+): His141, His143, and His212.

This sequence belongs to the aldolase class II family. RhaD subfamily. As to quaternary structure, homotetramer. Requires Zn(2+) as cofactor.

It is found in the cytoplasm. The catalysed reaction is L-rhamnulose 1-phosphate = (S)-lactaldehyde + dihydroxyacetone phosphate. Its pathway is carbohydrate degradation; L-rhamnose degradation; glycerone phosphate from L-rhamnose: step 3/3. Catalyzes the reversible cleavage of L-rhamnulose-1-phosphate to dihydroxyacetone phosphate (DHAP) and L-lactaldehyde. The polypeptide is Putative rhamnulose-1-phosphate aldolase (Salmonella typhi).